Here is a 910-residue protein sequence, read N- to C-terminus: Staphylococcal nuclease domain-containing protein 1 (910 aa).

The residue at position 2 (A2) is an N-acetylalanine. TNase-like domains lie at 18-166, 193-328, and 341-496; these read TVQR…MWSE, KPVN…IWRD, and KQFV…LHSK. T103 bears the Phosphothreonine mark. K193 is subject to N6-acetyllysine. Residues T235 and T240 each carry the phosphothreonine modification. 2 consecutive short sequence motifs (nuclear localization signal) follow at residues 321–325 and 388–392; these read RRLRI and KKLRP. S426 carries the post-translational modification Phosphoserine. K513 is covalently cross-linked (Glycyl lysine isopeptide (Lys-Gly) (interchain with G-Cter in SUMO2)). In terms of domain architecture, TNase-like 4 spans 525–660; that stretch reads GRSEAVVEYV…KQRKEKVWAH (136 aa). K641 is modified (N6-acetyllysine). Phosphoserine is present on S645. A Tudor domain is found at 729 to 787; the sequence is APRRGEFCIAKFVDGEWYRARVEKVESPAKVHVFYIDYGNREILPSTRLGTLPPAFSTR. T779 is modified (phosphothreonine). S785 and S909 each carry phosphoserine.

Forms a ternary complex with STAT6 and POLR2A. Associates with the RNA-induced silencing complex (RISC). Interacts with the RISC components AGO2, FMR1 and TNRC6A. Interacts with GTF2E1 and GTF2E2. Interacts with PIM1. Interacts with STAT5. Interacts with SYT11 (via C2 2 domain); the interaction with SYT11 is direct. Phosphorylated by PIM1 in vitro.

The protein resides in the cytoplasm. The protein localises to the nucleus. It localises to the melanosome. The catalysed reaction is Endonucleolytic cleavage to nucleoside 3'-phosphates and 3'-phosphooligonucleotide end-products.. Functionally, endonuclease that mediates miRNA decay of both protein-free and AGO2-loaded miRNAs. As part of its function in miRNA decay, regulates mRNAs involved in G1-to-S phase transition. Functions as a bridging factor between STAT6 and the basal transcription factor. Plays a role in PIM1 regulation of MYB activity. Functions as a transcriptional coactivator for STAT5. The chain is Staphylococcal nuclease domain-containing protein 1 (Snd1) from Mus musculus (Mouse).